The chain runs to 117 residues: UPF0231 protein HI_1724 (117 aa).

Belongs to the UPF0231 family.

The polypeptide is UPF0231 protein HI_1724 (Haemophilus influenzae (strain ATCC 51907 / DSM 11121 / KW20 / Rd)).